The chain runs to 482 residues: Cysteine--tRNA ligase (482 aa).

Position 29 (C29) interacts with Zn(2+). The 'HIGH' region signature appears at V31 to H41. C213, H238, and E242 together coordinate Zn(2+). Residues K275–S279 carry the 'KMSKS' region motif. K278 is a binding site for ATP.

It belongs to the class-I aminoacyl-tRNA synthetase family. Monomer. The cofactor is Zn(2+).

It is found in the cytoplasm. It catalyses the reaction tRNA(Cys) + L-cysteine + ATP = L-cysteinyl-tRNA(Cys) + AMP + diphosphate. This is Cysteine--tRNA ligase from Gloeobacter violaceus (strain ATCC 29082 / PCC 7421).